A 379-amino-acid chain; its full sequence is Tetraacyldisaccharide 4'-kinase (379 aa).

Position 63 to 70 (63 to 70 (AVGGAGKT)) interacts with ATP.

Belongs to the LpxK family.

The catalysed reaction is a lipid A disaccharide + ATP = a lipid IVA + ADP + H(+). The protein operates within glycolipid biosynthesis; lipid IV(A) biosynthesis; lipid IV(A) from (3R)-3-hydroxytetradecanoyl-[acyl-carrier-protein] and UDP-N-acetyl-alpha-D-glucosamine: step 6/6. In terms of biological role, transfers the gamma-phosphate of ATP to the 4'-position of a tetraacyldisaccharide 1-phosphate intermediate (termed DS-1-P) to form tetraacyldisaccharide 1,4'-bis-phosphate (lipid IVA). The chain is Tetraacyldisaccharide 4'-kinase from Anaeromyxobacter dehalogenans (strain 2CP-1 / ATCC BAA-258).